Reading from the N-terminus, the 386-residue chain is G2/mitotic-specific cyclin-B2 (386 aa).

The interval 45-64 (TNGKVGPSKKPSKASCAQKP) is disordered.

It belongs to the cyclin family. Cyclin AB subfamily. In terms of assembly, interacts with the CDK1 protein kinase to form a serine/threonine kinase holoenzyme complex also known as maturation promoting factor (MPF). The cyclin subunit imparts substrate specificity to the complex.

Functionally, essential for the control of the cell cycle at the G2/M (mitosis) transition. The sequence is that of G2/mitotic-specific cyclin-B2 (ccnb2) from Oryzias luzonensis (Luzon ricefish).